Consider the following 177-residue polypeptide: ATP synthase subunit delta (177 aa).

It belongs to the ATPase delta chain family. In terms of assembly, F-type ATPases have 2 components, F(1) - the catalytic core - and F(0) - the membrane proton channel. F(1) has five subunits: alpha(3), beta(3), gamma(1), delta(1), epsilon(1). F(0) has three main subunits: a(1), b(2) and c(10-14). The alpha and beta chains form an alternating ring which encloses part of the gamma chain. F(1) is attached to F(0) by a central stalk formed by the gamma and epsilon chains, while a peripheral stalk is formed by the delta and b chains.

Its subcellular location is the cell inner membrane. Functionally, f(1)F(0) ATP synthase produces ATP from ADP in the presence of a proton or sodium gradient. F-type ATPases consist of two structural domains, F(1) containing the extramembraneous catalytic core and F(0) containing the membrane proton channel, linked together by a central stalk and a peripheral stalk. During catalysis, ATP synthesis in the catalytic domain of F(1) is coupled via a rotary mechanism of the central stalk subunits to proton translocation. In terms of biological role, this protein is part of the stalk that links CF(0) to CF(1). It either transmits conformational changes from CF(0) to CF(1) or is implicated in proton conduction. In Yersinia enterocolitica serotype O:8 / biotype 1B (strain NCTC 13174 / 8081), this protein is ATP synthase subunit delta.